The sequence spans 766 residues: UPF0313 protein PP_4872 (766 aa).

A Radical SAM core domain is found at 371–649 (AYEMIRFSVN…KAFLRYHDPK (279 aa)). Residues Cys-385, Cys-389, and Cys-392 each coordinate [4Fe-4S] cluster. The tract at residues 670–766 (GKHQLIPLHQ…KKPRQPVIPR (97 aa)) is disordered. A compositionally biased stretch (basic and acidic residues) spans 723–735 (KPWDKREKAKAEA).

This sequence belongs to the UPF0313 family. [4Fe-4S] cluster serves as cofactor.

The protein is UPF0313 protein PP_4872 of Pseudomonas putida (strain ATCC 47054 / DSM 6125 / CFBP 8728 / NCIMB 11950 / KT2440).